Here is a 208-residue protein sequence, read N- to C-terminus: Protein GrpE (208 aa).

Residues M1–T12 show a composition bias toward basic and acidic residues. The interval M1–N51 is disordered. Positions E13 to Q23 are enriched in polar residues. Acidic residues predominate over residues E42–N51.

The protein belongs to the GrpE family. In terms of assembly, homodimer.

Its subcellular location is the cytoplasm. Functionally, participates actively in the response to hyperosmotic and heat shock by preventing the aggregation of stress-denatured proteins, in association with DnaK and GrpE. It is the nucleotide exchange factor for DnaK and may function as a thermosensor. Unfolded proteins bind initially to DnaJ; upon interaction with the DnaJ-bound protein, DnaK hydrolyzes its bound ATP, resulting in the formation of a stable complex. GrpE releases ADP from DnaK; ATP binding to DnaK triggers the release of the substrate protein, thus completing the reaction cycle. Several rounds of ATP-dependent interactions between DnaJ, DnaK and GrpE are required for fully efficient folding. The polypeptide is Protein GrpE (Staphylococcus aureus (strain COL)).